The chain runs to 378 residues: Carbamoyl phosphate synthase small chain (378 aa).

Residues 1 to 189 (MTKPAILALA…DSHPTIDAAD (189 aa)) form a CPSase region. S47, G241, and G243 together coordinate L-glutamine. In terms of domain architecture, Glutamine amidotransferase type-1 spans 193 to 378 (HVVAFDYGVK…RFTDAMAKRR (186 aa)). The active-site Nucleophile is the C269. Residues L270, Q273, N311, G313, and F314 each contribute to the L-glutamine site. Catalysis depends on residues H353 and E355.

Belongs to the CarA family. As to quaternary structure, composed of two chains; the small (or glutamine) chain promotes the hydrolysis of glutamine to ammonia, which is used by the large (or ammonia) chain to synthesize carbamoyl phosphate. Tetramer of heterodimers (alpha,beta)4.

The enzyme catalyses hydrogencarbonate + L-glutamine + 2 ATP + H2O = carbamoyl phosphate + L-glutamate + 2 ADP + phosphate + 2 H(+). It catalyses the reaction L-glutamine + H2O = L-glutamate + NH4(+). The protein operates within amino-acid biosynthesis; L-arginine biosynthesis; carbamoyl phosphate from bicarbonate: step 1/1. Its pathway is pyrimidine metabolism; UMP biosynthesis via de novo pathway; (S)-dihydroorotate from bicarbonate: step 1/3. Its function is as follows. Small subunit of the glutamine-dependent carbamoyl phosphate synthetase (CPSase). CPSase catalyzes the formation of carbamoyl phosphate from the ammonia moiety of glutamine, carbonate, and phosphate donated by ATP, constituting the first step of 2 biosynthetic pathways, one leading to arginine and/or urea and the other to pyrimidine nucleotides. The small subunit (glutamine amidotransferase) binds and cleaves glutamine to supply the large subunit with the substrate ammonia. The sequence is that of Carbamoyl phosphate synthase small chain from Pseudomonas putida (strain ATCC 47054 / DSM 6125 / CFBP 8728 / NCIMB 11950 / KT2440).